A 284-amino-acid polypeptide reads, in one-letter code: NADH-cytochrome b5 reductase 1 (284 aa).

Residues 8 to 28 (PFIIFATVAAIISSAVAYYFF) form a helical membrane-spanning segment. The region spanning 41–144 (NDFQKFPLIE…RGPKGFFTYT (104 aa)) is the FAD-binding FR-type domain. FAD is bound by residues 124-139 (ESKK…GPKG) and 150-182 (SFGM…KVSL).

Belongs to the flavoprotein pyridine nucleotide cytochrome reductase family. As to quaternary structure, monomer. Component of the 2-(3-amino-3-carboxypropyl)histidine synthase complex composed of DPH1, DPH2, DPH3 and a NADH-dependent reductase, predominantly CBR1. Requires FAD as cofactor.

It is found in the mitochondrion outer membrane. The enzyme catalyses 2 Fe(III)-[cytochrome b5] + NADH = 2 Fe(II)-[cytochrome b5] + NAD(+) + H(+). It catalyses the reaction 2 Fe(3+)-[Dph3] + NADH = 2 Fe(2+)-[Dph3] + NAD(+) + H(+). The protein operates within protein modification; peptidyl-diphthamide biosynthesis. NADH-dependent reductase for DPH3 and cytochrome b5. Required for the first step of diphthamide biosynthesis, a post-translational modification of histidine which occurs in elongation factor 2. DPH1 and DPH2 transfer a 3-amino-3-carboxypropyl (ACP) group from S-adenosyl-L-methionine (SAM) to a histidine residue, the reaction is assisted by a reduction system comprising DPH3 and a NADH-dependent reductase, predominantly CBR1. By reducing DPH3, also involved in the formation of the tRNA wobble base modification mcm5s 2U (5-methoxycarbonylmethyl-2-thiouridine), mediated by the elongator complex. The cytochrome b5/NADH cytochrome b5 reductase electron transfer system supports the catalytic activity of several sterol biosynthetic enzymes. The polypeptide is NADH-cytochrome b5 reductase 1 (CBR1) (Debaryomyces hansenii (strain ATCC 36239 / CBS 767 / BCRC 21394 / JCM 1990 / NBRC 0083 / IGC 2968) (Yeast)).